We begin with the raw amino-acid sequence, 145 residues long: uncharacterized protein (145 aa).

Positions 1–20 (MPSKVCTLILLFSVINQMKC) are cleaved as a signal peptide.

This is an uncharacterized protein from Caenorhabditis elegans.